A 415-amino-acid polypeptide reads, in one-letter code: Imidazolonepropionase (415 aa).

Residues His-83 and His-85 each coordinate Fe(3+). Zn(2+) is bound by residues His-83 and His-85. Arg-92, Tyr-155, and His-188 together coordinate 4-imidazolone-5-propanoate. Tyr-155 provides a ligand contact to N-formimidoyl-L-glutamate. Residue His-250 coordinates Fe(3+). His-250 lines the Zn(2+) pocket. Gln-253 serves as a coordination point for 4-imidazolone-5-propanoate. Asp-324 serves as a coordination point for Fe(3+). Zn(2+) is bound at residue Asp-324. 2 residues coordinate N-formimidoyl-L-glutamate: Asn-326 and Gly-328. Position 329 (Ser-329) interacts with 4-imidazolone-5-propanoate.

This sequence belongs to the metallo-dependent hydrolases superfamily. HutI family. Zn(2+) serves as cofactor. It depends on Fe(3+) as a cofactor.

The protein resides in the cytoplasm. It carries out the reaction 4-imidazolone-5-propanoate + H2O = N-formimidoyl-L-glutamate. Its pathway is amino-acid degradation; L-histidine degradation into L-glutamate; N-formimidoyl-L-glutamate from L-histidine: step 3/3. Functionally, catalyzes the hydrolytic cleavage of the carbon-nitrogen bond in imidazolone-5-propanoate to yield N-formimidoyl-L-glutamate. It is the third step in the universal histidine degradation pathway. In Rubrobacter xylanophilus (strain DSM 9941 / JCM 11954 / NBRC 16129 / PRD-1), this protein is Imidazolonepropionase.